A 206-amino-acid chain; its full sequence is Outer-membrane lipoprotein LolB (206 aa).

Residues 1-18 form the signal peptide; the sequence is MKTFKFLTALFATAILTA. C19 carries N-palmitoyl cysteine lipidation. C19 carries the S-diacylglycerol cysteine lipid modification.

Belongs to the LolB family. As to quaternary structure, monomer.

It is found in the cell outer membrane. Functionally, plays a critical role in the incorporation of lipoproteins in the outer membrane after they are released by the LolA protein. This chain is Outer-membrane lipoprotein LolB, found in Haemophilus influenzae (strain PittEE).